Here is a 223-residue protein sequence, read N- to C-terminus: Glutathione S-transferase 4 (223 aa).

A Blocked amino end (Ala) modification is found at Ala-2. In terms of domain architecture, GST N-terminal spans 4–85 (PAVKVYGWAI…HVLRKHKPEL (82 aa)). Residues Ser-14, 43 to 44 (HR), 56 to 57 (KV), and 69 to 70 (ES) each bind glutathione. Positions 90-223 (RLEQTAMVDV…VGAGAPKEQE (134 aa)) constitute a GST C-terminal domain.

Belongs to the GST superfamily. Phi family. In terms of assembly, homodimer or heterodimer of GST-I and GST-IV (=GST-II). In terms of tissue distribution, seedling roots.

It catalyses the reaction RX + glutathione = an S-substituted glutathione + a halide anion + H(+). Functionally, conjugation of reduced glutathione to a wide number of exogenous and endogenous hydrophobic electrophiles. Involved in the detoxification of certain herbicides. Most active with substrates possessing a chloroacetamide structure. Trans-cinnamic acid and 1-chloro-2,4-dinitrobenzene are not effective substrates. May play an important role in the benoxacor-mediated protection of maize from metolachlor injury. The protein is Glutathione S-transferase 4 (GST4) of Zea mays (Maize).